Here is a 359-residue protein sequence, read N- to C-terminus: Probable dual-specificity RNA methyltransferase RlmN (359 aa).

Glu99 serves as the catalytic Proton acceptor. Residues 105 to 342 (TENRRTACVS…VTIRKSYGTT (238 aa)) form the Radical SAM core domain. A disulfide bond links Cys112 and Cys347. Cys119, Cys123, and Cys126 together coordinate [4Fe-4S] cluster. Residues 171–172 (GE), Ser204, 227–229 (SLH), and Asn304 contribute to the S-adenosyl-L-methionine site. The S-methylcysteine intermediate role is filled by Cys347.

It belongs to the radical SAM superfamily. RlmN family. It depends on [4Fe-4S] cluster as a cofactor.

Its subcellular location is the cytoplasm. It carries out the reaction adenosine(2503) in 23S rRNA + 2 reduced [2Fe-2S]-[ferredoxin] + 2 S-adenosyl-L-methionine = 2-methyladenosine(2503) in 23S rRNA + 5'-deoxyadenosine + L-methionine + 2 oxidized [2Fe-2S]-[ferredoxin] + S-adenosyl-L-homocysteine. The enzyme catalyses adenosine(37) in tRNA + 2 reduced [2Fe-2S]-[ferredoxin] + 2 S-adenosyl-L-methionine = 2-methyladenosine(37) in tRNA + 5'-deoxyadenosine + L-methionine + 2 oxidized [2Fe-2S]-[ferredoxin] + S-adenosyl-L-homocysteine. Specifically methylates position 2 of adenine 2503 in 23S rRNA and position 2 of adenine 37 in tRNAs. The sequence is that of Probable dual-specificity RNA methyltransferase RlmN from Pelodictyon phaeoclathratiforme (strain DSM 5477 / BU-1).